Here is a 509-residue protein sequence, read N- to C-terminus: tRNA-2-methylthio-N(6)-dimethylallyladenosine synthase (509 aa).

The span at 1 to 15 (MNEQQRLASQQVNSS) shows a compositional bias: polar residues. A disordered region spans residues 1 to 26 (MNEQQRLASQQVNSSTKKEEKDYSKY). Residues 16-25 (TKKEEKDYSK) are compositionally biased toward basic and acidic residues. The MTTase N-terminal domain occupies 66–184 (RKFYIRTYGC…LPYILKDAMF (119 aa)). Residues C75, C111, C145, C221, C225, and C228 each coordinate [4Fe-4S] cluster. A Radical SAM core domain is found at 207-437 (RRGDIKAWVN…NALVNKLAIE (231 aa)). The TRAM domain maps to 440–503 (DRYKGQIVEV…TWSLNGELVE (64 aa)).

It belongs to the methylthiotransferase family. MiaB subfamily. Monomer. The cofactor is [4Fe-4S] cluster.

It localises to the cytoplasm. The enzyme catalyses N(6)-dimethylallyladenosine(37) in tRNA + (sulfur carrier)-SH + AH2 + 2 S-adenosyl-L-methionine = 2-methylsulfanyl-N(6)-dimethylallyladenosine(37) in tRNA + (sulfur carrier)-H + 5'-deoxyadenosine + L-methionine + A + S-adenosyl-L-homocysteine + 2 H(+). Catalyzes the methylthiolation of N6-(dimethylallyl)adenosine (i(6)A), leading to the formation of 2-methylthio-N6-(dimethylallyl)adenosine (ms(2)i(6)A) at position 37 in tRNAs that read codons beginning with uridine. The chain is tRNA-2-methylthio-N(6)-dimethylallyladenosine synthase from Bacillus cereus (strain ZK / E33L).